Reading from the N-terminus, the 213-residue chain is Nicotinamidase (213 aa).

The Proton acceptor role is filled by Asp10. Zn(2+) is bound by residues Asp52, His54, and His86. The active site involves Lys111. Residue Cys156 is the Nucleophile of the active site.

Belongs to the isochorismatase family.

The enzyme catalyses nicotinamide + H2O = nicotinate + NH4(+). The catalysed reaction is pyrazinamide + H2O = pyrazine-2-carboxylate + NH4(+). Its pathway is cofactor biosynthesis; nicotinate biosynthesis; nicotinate from nicotinamide: step 1/1. In terms of biological role, catalyzes the deamidation of nicotinamide (NAM) into nicotinate. Likely functions in the cyclical salvage pathway for production of NAD from nicotinamide. Is also able to hydrolyze the first-line antituberculous drug pyrazinamide (PZA) into pyrazinoic acid in vitro, but this reaction is not considered to be physiologically relevant. The polypeptide is Nicotinamidase (Escherichia coli (strain K12)).